Consider the following 256-residue polypeptide: Tumor necrosis factor receptor superfamily member 9 (256 aa).

Residues 1 to 23 (MGNNCYNVVVIVLLLVGCEKVGA) form the signal peptide. TNFR-Cys repeat units follow at residues 24-45 (VQNSCDNCQPGTFCRKYNPVCK), 46-85 (SCPPSTFSSIGGQPNCNICRVCAGYFRFKKFCSSTHNAEC), 86-117 (ECIEGFHCLGPQCTRCEKDCRPGQELTKQGCK), and 118-159 (TCSL…VVCG). At 24-187 (VQNSCDNCQP…GPGGHSLQVL (164 aa)) the chain is on the extracellular side. 9 disulfides stabilise this stretch: C28–C37, C31–C44, C47–C61, C64–C77, C67–C85, C87–C93, C98–C105, C101–C116, and C119–C133. N128 and N138 each carry an N-linked (GlcNAc...) asparagine glycan. Residues C139 and C158 are joined by a disulfide bond. Residues 188-208 (TLFLALTSALLLALIFITLLF) traverse the membrane as a helical segment. At 209-256 (SVLKWIRKKFPHIFKQPFKKTTGAAQEEDACSCRCPQEEEGGGGGYEL) the chain is on the cytoplasmic side.

As to quaternary structure, predominantly homodimeric, but may also exist as a monomer. Associates with p56-LCK. Interacts with TRAF1, TRAF2 and TRAF3. Expressed in activated thymocytes, splenic T cells, CD4(+), and CD8(+) T-cells.

Its subcellular location is the cell membrane. In terms of biological role, receptor for TNFSF9/4-1BBL. Conveys a signal that enhances CD8(+) T-cell survival, cytotoxicity, and mitochondrial activity, thereby promoting immunity against viruses and tumors. This is Tumor necrosis factor receptor superfamily member 9 (Tnfrsf9) from Mus musculus (Mouse).